An 802-amino-acid chain; its full sequence is Ribosomal protein S6 kinase alpha-5 (802 aa).

Residues 1–22 (MEEEGGSSGGAAGTSADGGDGG) are compositionally biased toward gly residues. The disordered stretch occupies residues 1-23 (MEEEGGSSGGAAGTSADGGDGGE). The region spanning 49–318 (FELLKVLGTG…ADEIKEHLFF (270 aa)) is the Protein kinase 1 domain. ATP contacts are provided by residues 55 to 63 (LGTGAYGKV) and Lys-81. Asp-177 acts as the Proton acceptor in catalysis. Ser-212 carries the post-translational modification Phosphoserine; by autocatalysis. Positions 319-387 (QKINWDDLAA…VAPSILFKRN (69 aa)) constitute an AGC-kinase C-terminal domain. Ser-360 carries the post-translational modification Phosphoserine; by MAPK1, MAPK3 and MAPK14. 2 positions are modified to phosphoserine; by autocatalysis: Ser-376 and Ser-381. Residues 426–687 (DLKDKPLGEG…MSGLRYNEWL (262 aa)) form the Protein kinase 2 domain. Residues 432–440 (LGEGSFSIC) and Lys-455 each bind ATP. Catalysis depends on Asp-544, which acts as the Proton acceptor. Thr-581 is modified (phosphothreonine; by MAPK1, MAPK3 and MAPK14). Residues Ser-647, Ser-657, Ser-691, and Ser-695 each carry the phosphoserine modification. The residue at position 700 (Thr-700) is a Phosphothreonine; by MAPK1, MAPK3 and MAPK14. The tract at residues 741 to 802 (AKRRKMKKTS…TLFQFSDSVA (62 aa)) is disordered. The segment covering 749-779 (TSTSTETRSSSSESSHSSSSHSHGKTTPTKT) has biased composition (low complexity). A phosphoserine; by autocatalysis mark is found at Ser-750, Ser-752, and Ser-758. A compositionally biased stretch (polar residues) spans 780–802 (LQPSNPADSNNPETLFQFSDSVA). Residue Ser-798 is modified to Phosphoserine.

Belongs to the protein kinase superfamily. AGC Ser/Thr protein kinase family. S6 kinase subfamily. As to quaternary structure, forms a complex with either MAPK1/ERK2 or MAPK3/ERK1 in quiescent cells which transiently dissociates following mitogenic stimulation. Also associates with MAPK14/p38-alpha. Activated RPS6KA5 associates with and phosphorylates the NF-kappa-B p65 subunit RELA. Interacts with CREBBP and EP300. The cofactor is Mg(2+). Ser-376 and Thr-581 phosphorylation is required for kinase activity. Ser-376 and Ser-212 are autophosphorylated by the C-terminal kinase domain, and their phosphorylation is essential for the catalytic activity of the N-terminal kinase domain. Phosphorylated at Ser-360, Thr-581 and Thr-700 by MAPK1/ERK2, MAPK3/ERK1 and MAPK14/p38-alpha. Autophosphorylated at Ser-750, Ser-752 and Ser-758 by the N-terminal kinase domain. In terms of processing, ubiquitinated. Widely expressed with high levels in heart, brain and placenta. Less abundant in lung, kidney and liver.

Its subcellular location is the nucleus. It is found in the cytoplasm. It catalyses the reaction L-seryl-[protein] + ATP = O-phospho-L-seryl-[protein] + ADP + H(+). It carries out the reaction L-threonyl-[protein] + ATP = O-phospho-L-threonyl-[protein] + ADP + H(+). Activated by phosphorylation at Ser-360, Thr-581 and Thr-700 by MAPK1/ERK2, MAPK3/ERK1 and MAPK14/p38-alpha, and by further autophosphorylation of Ser-212, Ser-376 and Ser-381 by the activated C-terminal kinase domain. The active N-terminal kinase domain finally phosphorylates downstream substrates, as well as Ser-750, Ser-752 and Ser-758 in its own C-terminal region. In terms of biological role, serine/threonine-protein kinase that is required for the mitogen or stress-induced phosphorylation of the transcription factors CREB1 and ATF1 and for the regulation of the transcription factors RELA, STAT3 and ETV1/ER81, and that contributes to gene activation by histone phosphorylation and functions in the regulation of inflammatory genes. Phosphorylates CREB1 and ATF1 in response to mitogenic or stress stimuli such as UV-C irradiation, epidermal growth factor (EGF) and anisomycin. Plays an essential role in the control of RELA transcriptional activity in response to TNF and upon glucocorticoid, associates in the cytoplasm with the glucocorticoid receptor NR3C1 and contributes to RELA inhibition and repression of inflammatory gene expression. In skeletal myoblasts is required for phosphorylation of RELA at 'Ser-276' during oxidative stress. In erythropoietin-stimulated cells, is necessary for the 'Ser-727' phosphorylation of STAT3 and regulation of its transcriptional potential. Phosphorylates ETV1/ER81 at 'Ser-191' and 'Ser-216', and thereby regulates its ability to stimulate transcription, which may be important during development and breast tumor formation. Directly represses transcription via phosphorylation of 'Ser-1' of histone H2A. Phosphorylates 'Ser-10' of histone H3 in response to mitogenics, stress stimuli and EGF, which results in the transcriptional activation of several immediate early genes, including proto-oncogenes c-fos/FOS and c-jun/JUN. May also phosphorylate 'Ser-28' of histone H3. Mediates the mitogen- and stress-induced phosphorylation of high mobility group protein 1 (HMGN1/HMG14). In lipopolysaccharide-stimulated primary macrophages, acts downstream of the Toll-like receptor TLR4 to limit the production of pro-inflammatory cytokines. Functions probably by inducing transcription of the MAP kinase phosphatase DUSP1 and the anti-inflammatory cytokine interleukin 10 (IL10), via CREB1 and ATF1 transcription factors. Plays a role in neuronal cell death by mediating the downstream effects of excitotoxic injury. Phosphorylates TRIM7 at 'Ser-107' in response to growth factor signaling via the MEK/ERK pathway, thereby stimulating its ubiquitin ligase activity. The polypeptide is Ribosomal protein S6 kinase alpha-5 (RPS6KA5) (Homo sapiens (Human)).